Consider the following 215-residue polypeptide: BAG family molecular chaperone regulator 5, mitochondrial (215 aa).

The transit peptide at 1–14 (MKRSRKFSSSTTTT) directs the protein to the mitochondrion. Positions 50 to 79 (ATAAAARIQSGYRSYRIRNLYKKISSINRE) constitute an IQ domain. The region spanning 72 to 149 (KISSINREAN…GMQEILDSIS (78 aa)) is the BAG domain.

In terms of assembly, binds to the ATPase domain of HSP70/HSC70 chaperones. Interacts with HSP70-1.

It localises to the mitochondrion. In terms of biological role, co-chaperone that regulates diverse cellular pathways, such as programmed cell death and stress responses. The sequence is that of BAG family molecular chaperone regulator 5, mitochondrial (BAG5) from Arabidopsis thaliana (Mouse-ear cress).